We begin with the raw amino-acid sequence, 168 residues long: Mediator of RNA polymerase II transcription subunit 31 (168 aa).

The segment covering E113–E159 has biased composition (acidic residues). Residues E113–T168 form a disordered region.

It belongs to the Mediator complex subunit 31 family. As to quaternary structure, component of the Mediator complex.

It localises to the nucleus. Its function is as follows. Component of the Mediator complex, a coactivator involved in the regulated transcription of nearly all RNA polymerase II-dependent genes. Mediator functions as a bridge to convey information from gene-specific regulatory proteins to the basal RNA polymerase II transcription machinery. Mediator is recruited to promoters by direct interactions with regulatory proteins and serves as a scaffold for the assembly of a functional preinitiation complex with RNA polymerase II and the general transcription factors. In Caenorhabditis briggsae, this protein is Mediator of RNA polymerase II transcription subunit 31 (mdt-31).